Consider the following 77-residue polypeptide: uncharacterized protein (77 aa).

This is an uncharacterized protein from Acidianus hospitalis (AFV-1).